The primary structure comprises 235 residues: NADH-quinone oxidoreductase subunit B 2 (235 aa).

Positions 1-14 are enriched in low complexity; sequence MGLTSRPTPASRQP. Residues 1-24 are disordered; it reads MGLTSRPTPASRQPASPPPADPVL. [4Fe-4S] cluster contacts are provided by C63, C64, C129, and C159. Residues 188-235 form a disordered region; sequence TGATGGGPSTDALRSGLVAAPTAPGPTAPASTAPGPTAPAPTQDEERR.

Belongs to the complex I 20 kDa subunit family. NDH-1 is composed of 14 different subunits. Subunits NuoB, C, D, E, F, and G constitute the peripheral sector of the complex. [4Fe-4S] cluster is required as a cofactor.

Its subcellular location is the cell membrane. The enzyme catalyses a quinone + NADH + 5 H(+)(in) = a quinol + NAD(+) + 4 H(+)(out). Functionally, NDH-1 shuttles electrons from NADH, via FMN and iron-sulfur (Fe-S) centers, to quinones in the respiratory chain. The immediate electron acceptor for the enzyme in this species is believed to be a menaquinone. Couples the redox reaction to proton translocation (for every two electrons transferred, four hydrogen ions are translocated across the cytoplasmic membrane), and thus conserves the redox energy in a proton gradient. The chain is NADH-quinone oxidoreductase subunit B 2 from Streptomyces griseus subsp. griseus (strain JCM 4626 / CBS 651.72 / NBRC 13350 / KCC S-0626 / ISP 5235).